Here is an 841-residue protein sequence, read N- to C-terminus: Envelope glycoprotein H (841 aa).

The signal sequence occupies residues 1–17 (MFALVLAVVILPLWTTA). N-linked (GlcNAc...) asparagine; by host glycans are attached at residues asparagine 18, asparagine 45, and asparagine 217. At 18–802 (NKSYVTPTPA…ERRQAIRMSG (785 aa)) the chain is on the virion surface side. The interaction with gL stretch occupies residues 246–309 (DSGRVEVNIG…DPGPSYRVYL (64 aa)). 5 N-linked (GlcNAc...) asparagine; by host glycosylation sites follow: asparagine 317, asparagine 499, asparagine 522, asparagine 760, and asparagine 783. Residues 803 to 823 (QYLGASLGGAFLAVVGFGIIG) traverse the membrane as a helical segment. Over 824–841 (WMLCGNSRLREYNKIPLT) the chain is Intravirion.

The protein belongs to the herpesviridae glycoprotein H family. Interacts with glycoprotein L (gL); this interaction is necessary for the correct processing and cell surface expression of gH. The heterodimer gH/gL seems to interact with gB trimers during fusion. N-glycosylated, O-glycosylated, and sialylated.

The protein localises to the virion membrane. Its subcellular location is the host cell membrane. It localises to the host endosome membrane. Its function is as follows. The heterodimer glycoprotein H-glycoprotein L is required for the fusion of viral and plasma membranes leading to virus entry into the host cell. Following initial binding to host receptor, membrane fusion is mediated by the fusion machinery composed of gB and the heterodimer gH/gL. May also be involved in the fusion between the virion envelope and the outer nuclear membrane during virion morphogenesis. The chain is Envelope glycoprotein H from Varicella-zoster virus (strain Oka vaccine) (HHV-3).